Here is a 485-residue protein sequence, read N- to C-terminus: Chromosomal replication initiator protein DnaA (485 aa).

Residues 1–74 form a domain I, interacts with DnaA modulators region; that stretch reads MEKSKNIWSL…ILTNNGYDNV (74 aa). The segment at 74–140 is domain II; that stretch reads VTIVFTNQSP…EEEPKNFKNP (67 aa). The domain III, AAA+ region stretch occupies residues 141-357; that stretch reads FLKKRYTFEN…AAVTKLKAYI (217 aa). ATP-binding residues include Gly185, Gly187, Lys188, and Thr189. A domain IV, binds dsDNA region spans residues 358-485; sequence DLDNIEIDID…TELMNKIKKN (128 aa).

This sequence belongs to the DnaA family. As to quaternary structure, oligomerizes as a right-handed, spiral filament on DNA at oriC.

The protein localises to the cytoplasm. In terms of biological role, plays an essential role in the initiation and regulation of chromosomal replication. ATP-DnaA binds to the origin of replication (oriC) to initiate formation of the DNA replication initiation complex once per cell cycle. Binds the DnaA box (a 9 base pair repeat at the origin) and separates the double-stranded (ds)DNA. Forms a right-handed helical filament on oriC DNA; dsDNA binds to the exterior of the filament while single-stranded (ss)DNA is stabiized in the filament's interior. The ATP-DnaA-oriC complex binds and stabilizes one strand of the AT-rich DNA unwinding element (DUE), permitting loading of DNA polymerase. After initiation quickly degrades to an ADP-DnaA complex that is not apt for DNA replication. Binds acidic phospholipids. The chain is Chromosomal replication initiator protein DnaA from Borreliella afzelii (strain PKo) (Borrelia afzelii).